Consider the following 129-residue polypeptide: Glycine cleavage system H protein (129 aa).

The 83-residue stretch at 24–106 (EAVVGITEHA…YGAGWLFRIK (83 aa)) folds into the Lipoyl-binding domain. Lysine 65 is subject to N6-lipoyllysine.

It belongs to the GcvH family. The glycine cleavage system is composed of four proteins: P, T, L and H. (R)-lipoate serves as cofactor.

The glycine cleavage system catalyzes the degradation of glycine. The H protein shuttles the methylamine group of glycine from the P protein to the T protein. In Aeromonas salmonicida (strain A449), this protein is Glycine cleavage system H protein.